Reading from the N-terminus, the 366-residue chain is 5-amino-6-(D-ribitylamino)uracil--L-tyrosine 4-hydroxyphenyl transferase (366 aa).

Residues 51-290 (RCGNAITWVK…MIAISRLFLD (240 aa)) form the Radical SAM core domain. C70, C74, and C77 together coordinate [4Fe-4S] cluster.

Belongs to the radical SAM superfamily. CofH family. As to quaternary structure, consists of two subunits, CofG and CofH. The cofactor is [4Fe-4S] cluster.

The catalysed reaction is 5-amino-6-(D-ribitylamino)uracil + L-tyrosine + S-adenosyl-L-methionine = 5-amino-5-(4-hydroxybenzyl)-6-(D-ribitylimino)-5,6-dihydrouracil + 2-iminoacetate + 5'-deoxyadenosine + L-methionine + H(+). It functions in the pathway cofactor biosynthesis; coenzyme F0 biosynthesis. Its function is as follows. Catalyzes the radical-mediated synthesis of 5-amino-5-(4-hydroxybenzyl)-6-(D-ribitylimino)-5,6-dihydrouracil from 5-amino-6-(D-ribitylamino)uracil and L-tyrosine. In Methanospirillum hungatei JF-1 (strain ATCC 27890 / DSM 864 / NBRC 100397 / JF-1), this protein is 5-amino-6-(D-ribitylamino)uracil--L-tyrosine 4-hydroxyphenyl transferase.